The primary structure comprises 474 residues: Sulfide dehydrogenase subunit alpha (474 aa).

A propeptide spanning residues 1 to 2 (MP) is cleaved from the precursor. Cys-42, Cys-45, Cys-52, and Cys-56 together coordinate [4Fe-4S] cluster. Cys-101, Cys-107, and Cys-111 together coordinate [3Fe-4S] cluster.

In terms of assembly, heterodimer of alpha and beta subunits. FAD is required as a cofactor. [3Fe-4S] cluster serves as cofactor. The cofactor is [4Fe-4S] cluster.

The protein localises to the cytoplasm. It carries out the reaction n sulfur + hydrogen sulfide + NADP(+) = (n+1) sulfur + NADPH. The enzyme catalyses 2 reduced [2Fe-2S]-[ferredoxin] + NADP(+) + H(+) = 2 oxidized [2Fe-2S]-[ferredoxin] + NADPH. In terms of biological role, a bifunctional enzyme that catalyzes the reduction of elemental sulfur or polysulfide to hydrogen sulfide with NADPH as electron donor. Also functions as a reduced ferredoxin:NADP oxidoreductase with a very high affinity for reduced ferredoxin. Exhibits a broad specificity for various physiological and non-physiological substrates with varied reduction potentials such as methyl viologen, benzyl viologen, FAD, FMN, methylene blue, 2,6-dichlorophenolindophenol (DCIP), cytochrome C and ferricyanide with highest preference for benzyl viologen. Does not reduce fumarate, succinate, nitrate, nitrite, sulfate, sulfite or protons. Does not possess any hydrogenase activity or NADPH-dependent glutamate synthase activity. The polypeptide is Sulfide dehydrogenase subunit alpha (Pyrococcus furiosus (strain ATCC 43587 / DSM 3638 / JCM 8422 / Vc1)).